We begin with the raw amino-acid sequence, 311 residues long: tRNA-cytidine(32) 2-sulfurtransferase (311 aa).

The PP-loop motif signature appears at 47 to 52; sequence SGGKDS. Cys122, Cys125, and Cys213 together coordinate [4Fe-4S] cluster.

The protein belongs to the TtcA family. Homodimer. Requires Mg(2+) as cofactor. [4Fe-4S] cluster is required as a cofactor.

Its subcellular location is the cytoplasm. The enzyme catalyses cytidine(32) in tRNA + S-sulfanyl-L-cysteinyl-[cysteine desulfurase] + AH2 + ATP = 2-thiocytidine(32) in tRNA + L-cysteinyl-[cysteine desulfurase] + A + AMP + diphosphate + H(+). It participates in tRNA modification. Functionally, catalyzes the ATP-dependent 2-thiolation of cytidine in position 32 of tRNA, to form 2-thiocytidine (s(2)C32). The sulfur atoms are provided by the cysteine/cysteine desulfurase (IscS) system. The sequence is that of tRNA-cytidine(32) 2-sulfurtransferase from Salmonella paratyphi A (strain ATCC 9150 / SARB42).